The chain runs to 757 residues: MRFNQYSYINFPKENVLSELKKCGFDLQNTANHKDSLETFLRRFFFTYQDTNYPLSILAADKKTDLLTFFQSEDELTADIFYTVAFQLLGFSYLVDFEDSDVFRKETGFPIIYGDLIENLYQLLNTRTKKGNTLIDQLVSDGLIPEDNDYHYFNGKSLATFSNQDVIREVVYVESRVDTDQKGLSDLVKVSIIRPRFDGKIPAIMTASPYHQGTNDKASDKALYKMEVELEVKLPHKIELEEPQLNLVQPQGQAELVAEAEEKLTHINSSYTLNDYFLPRGFANLYVSGVGTKDSTGFMTNGDYQQIEAYKNVIDWLNGRCRAFTDHTRQRQVKADWSNGKVATTGLSYLGTMSNGLATTGVDGLEVIIAEAGISSWYNYYRENGLVTSPGGYPGEDFDSLAELTYSRNLLAGDYIRGNEAHQADLEKVKAQLDRKTGDYNQFWHDRNYLLNAHKVKAEVVFTHGSQDWNVKPLHVYQMFHALPTHIHKHLFFHNGAHVYMNNWQSIDFRESINALLTKKLLGQETDFQLPTVIWQDNTAPQTWLSLDNFGGQENCETFSLGQEEQAIQNQYPDKDFERYGKTYQTFNTELYQGKANQITINLPVTKDLHLNGRAQLNLRIKSSTNKGLLSAQLLEFGQKKYLQPYPAILSARTIDNGRYHMLENLCELPFRPEAQRVVTKGYLNLQNRNDLLLVEDITADEWMDVQFELQPTIYKLKEGDTLRLVLYTTDFEITIRDNTDYHLTVDLAQSMLTLPC.

Catalysis depends on charge relay system residues S348, D468, and H498.

Belongs to the peptidase S15 family. In terms of assembly, homodimer.

It is found in the cytoplasm. It catalyses the reaction Hydrolyzes Xaa-Pro-|- bonds to release unblocked, N-terminal dipeptides from substrates including Ala-Pro-|-p-nitroanilide and (sequentially) Tyr-Pro-|-Phe-Pro-|-Gly-Pro-|-Ile.. Its function is as follows. Removes N-terminal dipeptides sequentially from polypeptides having unsubstituted N-termini provided that the penultimate residue is proline. The sequence is that of Xaa-Pro dipeptidyl-peptidase from Streptococcus pneumoniae (strain ATCC 700669 / Spain 23F-1).